The primary structure comprises 493 residues: Galactose-1-phosphate uridylyltransferase (493 aa).

It belongs to the galactose-1-phosphate uridylyltransferase type 2 family.

It localises to the cytoplasm. The enzyme catalyses alpha-D-galactose 1-phosphate + UDP-alpha-D-glucose = alpha-D-glucose 1-phosphate + UDP-alpha-D-galactose. It functions in the pathway carbohydrate metabolism; galactose metabolism. This chain is Galactose-1-phosphate uridylyltransferase (galT), found in Streptococcus thermophilus.